We begin with the raw amino-acid sequence, 88 residues long: Small ribosomal subunit protein uS15c (88 aa).

It belongs to the universal ribosomal protein uS15 family. Part of the 30S ribosomal subunit.

Its subcellular location is the plastid. The protein resides in the chloroplast. The sequence is that of Small ribosomal subunit protein uS15c (rps15) from Cycas taitungensis (Prince sago).